We begin with the raw amino-acid sequence, 307 residues long: Nitrogenase iron protein 2 (307 aa).

13–20 contacts ATP; that stretch reads GKGGIGKS. Residue Cys-101 coordinates [4Fe-4S] cluster. Arg-104 is modified (ADP-ribosylarginine; by dinitrogenase reductase ADP-ribosyltransferase). Cys-135 contacts [4Fe-4S] cluster. The interval 285–307 is disordered; that stretch reads QLTETDKAAKESEKKQEDAEGEA.

Belongs to the NifH/BchL/ChlL family. As to quaternary structure, homodimer. [4Fe-4S] cluster is required as a cofactor. In terms of processing, the reversible ADP-ribosylation of Arg-104 inactivates the nitrogenase reductase and regulates nitrogenase activity.

It carries out the reaction N2 + 8 reduced [2Fe-2S]-[ferredoxin] + 16 ATP + 16 H2O = H2 + 8 oxidized [2Fe-2S]-[ferredoxin] + 2 NH4(+) + 16 ADP + 16 phosphate + 6 H(+). Functionally, the key enzymatic reactions in nitrogen fixation are catalyzed by the nitrogenase complex, which has 2 components: the iron protein and the molybdenum-iron protein. The polypeptide is Nitrogenase iron protein 2 (nifH2) (Mastigocladus laminosus (Fischerella sp.)).